A 512-amino-acid polypeptide reads, in one-letter code: Glutathione-binding protein GsiB (512 aa).

The N-terminal stretch at 1-26 is a signal peptide; that stretch reads MARAVHRSGLVALGIVTALMASCAFA.

The protein belongs to the bacterial solute-binding protein 5 family. As to quaternary structure, the complex is composed of two ATP-binding proteins (GsiA), two transmembrane proteins (GsiC and GsiD) and a solute-binding protein (GsiB).

Its subcellular location is the periplasm. Its function is as follows. Part of the ABC transporter complex GsiABCD involved in glutathione import. Binds glutathione. The polypeptide is Glutathione-binding protein GsiB (Shigella dysenteriae serotype 1 (strain Sd197)).